The primary structure comprises 79 residues: D-alanyl carrier protein (79 aa).

Positions Met1–Val76 constitute a Carrier domain. An O-(pantetheine 4'-phosphoryl)serine modification is found at Ser34.

This sequence belongs to the DltC family. 4'-phosphopantetheine is transferred from CoA to a specific serine of apo-DCP.

It localises to the cytoplasm. The protein operates within cell wall biogenesis; lipoteichoic acid biosynthesis. Carrier protein involved in the D-alanylation of lipoteichoic acid (LTA). The loading of thioester-linked D-alanine onto DltC is catalyzed by D-alanine--D-alanyl carrier protein ligase DltA. The DltC-carried D-alanyl group is further transferred to cell membrane phosphatidylglycerol (PG) by forming an ester bond, probably catalyzed by DltD. D-alanylation of LTA plays an important role in modulating the properties of the cell wall in Gram-positive bacteria, influencing the net charge of the cell wall. The polypeptide is D-alanyl carrier protein (Abiotrophia defectiva (Streptococcus defectivus)).